Consider the following 212-residue polypeptide: Probable GTP-binding protein EngB (212 aa).

Residues 22-212 form the EngB-type G domain; it reads GVSEFAFFGR…NILSLIAKRI (191 aa). Residues 30–37, 57–61, 95–98, 162–165, and 192–195 each bind GTP; these read GRSNAGKS, GMTRE, DLPG, TKAD, and ISSA. The Mg(2+) site is built by S37 and T59.

It belongs to the TRAFAC class TrmE-Era-EngA-EngB-Septin-like GTPase superfamily. EngB GTPase family. It depends on Mg(2+) as a cofactor.

Its function is as follows. Necessary for normal cell division and for the maintenance of normal septation. The protein is Probable GTP-binding protein EngB of Treponema denticola (strain ATCC 35405 / DSM 14222 / CIP 103919 / JCM 8153 / KCTC 15104).